The primary structure comprises 239 residues: Peptidyl-tRNA hydrolase (239 aa).

Y14 lines the tRNA pocket. H19 serves as the catalytic Proton acceptor. The tRNA site is built by F64, N66, and N112. The tract at residues 188 to 225 (GGKPDAEEPQAPKKQVGQSHIHKARNAAQPKKLPATGP) is disordered.

Belongs to the PTH family. As to quaternary structure, monomer.

It is found in the cytoplasm. It carries out the reaction an N-acyl-L-alpha-aminoacyl-tRNA + H2O = an N-acyl-L-amino acid + a tRNA + H(+). Functionally, hydrolyzes ribosome-free peptidyl-tRNAs (with 1 or more amino acids incorporated), which drop off the ribosome during protein synthesis, or as a result of ribosome stalling. Catalyzes the release of premature peptidyl moieties from peptidyl-tRNA molecules trapped in stalled 50S ribosomal subunits, and thus maintains levels of free tRNAs and 50S ribosomes. In Sinorhizobium fredii (strain NBRC 101917 / NGR234), this protein is Peptidyl-tRNA hydrolase.